Here is a 109-residue protein sequence, read N- to C-terminus: Set1 complex component sdc1 (109 aa).

The interval 49–109 is disordered; it reads QQKQKEIVNQ…SSNPGKNSAS (61 aa). Positions 73 to 87 are enriched in polar residues; it reads STPTMAEQVQTSFSN. Positions 88-101 are enriched in low complexity; sequence PASTPLTQTSSPSS.

Belongs to the dpy-30 family. In terms of assembly, component of the COMPASS (Set1C) complex composed of ash2, sdc1, set1, shg1, spp1, swd1, swd2 and swd3. Component of the Lid2 complex composed of ash2, jmj3, lid2, sdc1 and snt2.

Its subcellular location is the nucleus. The COMPASS (Set1C) complex specifically mono-, di- and trimethylates histone H3 to form H3K4me1/2/3, which subsequently activates gene expression by regulating transcription elongation and plays a role in telomere length maintenance. The polypeptide is Set1 complex component sdc1 (sdc1) (Schizosaccharomyces pombe (strain 972 / ATCC 24843) (Fission yeast)).